The following is a 577-amino-acid chain: Arginine--tRNA ligase (577 aa).

Positions 122-132 (PNVAKEMHVGH) match the 'HIGH' region motif.

Belongs to the class-I aminoacyl-tRNA synthetase family. In terms of assembly, monomer.

It is found in the cytoplasm. It carries out the reaction tRNA(Arg) + L-arginine + ATP = L-arginyl-tRNA(Arg) + AMP + diphosphate. This Vibrio vulnificus (strain YJ016) protein is Arginine--tRNA ligase.